The following is a 530-amino-acid chain: Chitin synthase 1 (530 aa).

Asn-17 carries N-linked (GlcNAc...) asparagine glycosylation. The disordered stretch occupies residues 22–94; sequence QESSSNLIQQ…QANNNRKVTR (73 aa). A compositionally biased stretch (polar residues) spans 24 to 56; the sequence is SSSNLIQQQQPGTNYARNQQTLSSLRSQKQQAE. 3 N-linked (GlcNAc...) asparagine glycosylation sites follow: Asn-118, Asn-310, and Asn-474. The next 2 helical transmembrane spans lie at 477–497 and 508–528; these read FFAG…GHGF and IYNV…LSFL.

It belongs to the chitin synthase family. Class II subfamily.

It is found in the cell membrane. It carries out the reaction [(1-&gt;4)-N-acetyl-beta-D-glucosaminyl](n) + UDP-N-acetyl-alpha-D-glucosamine = [(1-&gt;4)-N-acetyl-beta-D-glucosaminyl](n+1) + UDP + H(+). Polymerizes chitin, a structural polymer of the cell wall and septum, by transferring the sugar moiety of UDP-GlcNAc to the non-reducing end of the growing chitin polymer. The chain is Chitin synthase 1 from Rhizopus delemar (strain RA 99-880 / ATCC MYA-4621 / FGSC 9543 / NRRL 43880) (Mucormycosis agent).